Consider the following 262-residue polypeptide: Oxidoreductase AgnL4 (262 aa).

This sequence belongs to the avfA family.

The protein operates within secondary metabolite biosynthesis. In terms of biological role, oxidoreductase; part of the gene cluster that mediates the biosynthesis of agnestins, dihydroxy-xanthone metabolites. The pathway begins with the assembly and cyclization of atrochrysone thioester by the non-reducing polyketide synthase Agnpks1. The atrochrysone carboxyl ACP thioesterase AgnL7 then breaks the thioester bond and releases the atrochrysone carboxylic acid as the first enzyme-free intermediate. The decarboxylase AgnL1 then catalyzes the concerted decarboxylation-elimination required to convert atochrysone carboxylic acid into emodin anthrone, which is further oxidized to emodin by the anthrone oxygenase AgnL2. Emodin then undergoes reduction catalyzed by the oxidoreductase AgnL4 to yield the dihydroquinone tautomer which is the substrate for reduction by the short chain dehydrogenase AgnL6 reduction to produce hydroxyketone, followed by AgnL8 dehydration and likely spontaneous autoxidation to chrysophanol. Baeyer-Villiger oxidation by the oxidase AgnL3 leads to monodictyphenone via cleavage of the C-10/C-10a bond of chrysophanol. Alternative cleavage at the C-4a/C-10 bond of chrysophanol also leads to the formation some cephalone F. Further conversion to agnestins A and B, requires reduction to dihydro-monodictyphenone, oxidation to agnestin C probably via an epoxide, and rearrangement to either agnestin A or agnestin B directly, although agnestin A or agnestin B can also interconvert. Within the cluster, AgnR1 is the only unassigned oxidoreductase present which could be involved in this conversion. However, AgnR1 seems not to be involved in this step, and thus genes involved in the proposed oxidation/reduction may be located elsewhere on the genome. Further agnestin A derivatives are probably formed by spontaneous decarboxylations, dehydrations and methanolysis reactions. The sequence is that of Oxidoreductase AgnL4 from Paecilomyces divaricatus (Penicillium divaricatum).